Reading from the N-terminus, the 367-residue chain is GDSL esterase/lipase At4g28780 (367 aa).

An N-terminal signal peptide occupies residues 1–28; it reads MSTFLLTWIIMTVALSVTLFLMPQQTNA. S38 serves as the catalytic Nucleophile. The N-linked (GlcNAc...) asparagine glycan is linked to N119. Active-site residues include D328 and H331. N356 carries N-linked (GlcNAc...) asparagine glycosylation.

This sequence belongs to the 'GDSL' lipolytic enzyme family.

It localises to the secreted. This Arabidopsis thaliana (Mouse-ear cress) protein is GDSL esterase/lipase At4g28780.